The following is a 91-amino-acid chain: MSDGGQGVTRNTRKVREGYVVSDKMDKTIVVSLEDRKKHALYGKVMRRNTKVKAHDEANTAGVGDRVLLMETRPLSASKRWRLVEVVEKAK.

This sequence belongs to the universal ribosomal protein uS17 family. Part of the 30S ribosomal subunit.

In terms of biological role, one of the primary rRNA binding proteins, it binds specifically to the 5'-end of 16S ribosomal RNA. The protein is Small ribosomal subunit protein uS17 of Saccharopolyspora erythraea (strain ATCC 11635 / DSM 40517 / JCM 4748 / NBRC 13426 / NCIMB 8594 / NRRL 2338).